The chain runs to 447 residues: Argininosuccinate synthase (447 aa).

Residues Ala-17–Ser-25 and Ala-43 contribute to the ATP site. Tyr-99 lines the L-citrulline pocket. 2 residues coordinate ATP: Gly-129 and Thr-131. 3 residues coordinate L-aspartate: Thr-131, Asn-135, and Asp-136. Asn-135 serves as a coordination point for L-citrulline. Asp-136 is an ATP binding site. Arg-139 and Ser-192 together coordinate L-citrulline. Residue Asp-194 coordinates ATP. L-citrulline is bound by residues Thr-201, Glu-203, and Glu-280.

This sequence belongs to the argininosuccinate synthase family. Type 2 subfamily. As to quaternary structure, homotetramer.

The protein localises to the cytoplasm. The enzyme catalyses L-citrulline + L-aspartate + ATP = 2-(N(omega)-L-arginino)succinate + AMP + diphosphate + H(+). It functions in the pathway amino-acid biosynthesis; L-arginine biosynthesis; L-arginine from L-ornithine and carbamoyl phosphate: step 2/3. The chain is Argininosuccinate synthase from Escherichia coli O139:H28 (strain E24377A / ETEC).